The primary structure comprises 214 residues: Chalcone isomerase-like protein 1 (214 aa).

This sequence belongs to the chalcone isomerase family. In terms of tissue distribution, mostly expressed in glandular trichomes (lupulin glands), and, to a lower extent, in cones, cones bracts, leaves, stems and roots.

The protein resides in the cytoplasm. The enzyme catalyses a chalcone = a flavanone.. Its pathway is secondary metabolite biosynthesis; flavonoid biosynthesis. Its function is as follows. Involved in the biosynthesis of prenylated phenolics natural products which contribute to the bitter taste of beer and display broad biological activities. Involved in anthocyanin biosynthesis. Polyketide binding proteins (PBP) which reduces the catalytic activities of CHS_H1 and PT1L and prevents demethylxanthohumol (DMX) production, by binding to DMX and naringenin chalcone (NC) to stabilize the chalconoids ring-opened structure. The sequence is that of Chalcone isomerase-like protein 1 from Humulus lupulus (European hop).